Reading from the N-terminus, the 230-residue chain is tRNA (cytidine-2'-O-)-methyltransferase TrmJ (230 aa).

Residues 79-81 (TSG), G115, I135, and 142-144 (PIM) contribute to the S-adenosyl-L-methionine site.

This sequence belongs to the class IV-like SAM-binding methyltransferase superfamily. RNA methyltransferase TrmH family. As to quaternary structure, homodimer.

It localises to the cytoplasm. It catalyses the reaction cytidine(32) in tRNA + S-adenosyl-L-methionine = 2'-O-methylcytidine(32) in tRNA + S-adenosyl-L-homocysteine + H(+). Its function is as follows. Catalyzes the formation of 2'O-methylated cytidine (Cm32) at position 32 in tRNA. The protein is tRNA (cytidine-2'-O-)-methyltransferase TrmJ of Methanocaldococcus jannaschii (strain ATCC 43067 / DSM 2661 / JAL-1 / JCM 10045 / NBRC 100440) (Methanococcus jannaschii).